Reading from the N-terminus, the 236-residue chain is Ubiquinone biosynthesis O-methyltransferase (236 aa).

The S-adenosyl-L-methionine site is built by Arg-39, Gly-59, Asp-80, and Met-124.

It belongs to the methyltransferase superfamily. UbiG/COQ3 family.

It carries out the reaction a 3-demethylubiquinol + S-adenosyl-L-methionine = a ubiquinol + S-adenosyl-L-homocysteine + H(+). It catalyses the reaction a 3-(all-trans-polyprenyl)benzene-1,2-diol + S-adenosyl-L-methionine = a 2-methoxy-6-(all-trans-polyprenyl)phenol + S-adenosyl-L-homocysteine + H(+). The protein operates within cofactor biosynthesis; ubiquinone biosynthesis. Functionally, O-methyltransferase that catalyzes the 2 O-methylation steps in the ubiquinone biosynthetic pathway. The polypeptide is Ubiquinone biosynthesis O-methyltransferase (Shewanella baltica (strain OS223)).